Here is a 188-residue protein sequence, read N- to C-terminus: dCTP deaminase (188 aa).

DCTP is bound by residues 111-116 (KSTYAR), 135-137 (TLE), Gln156, Tyr170, and Gln180. Glu137 acts as the Proton donor/acceptor in catalysis.

Belongs to the dCTP deaminase family. In terms of assembly, homotrimer.

It carries out the reaction dCTP + H2O + H(+) = dUTP + NH4(+). It functions in the pathway pyrimidine metabolism; dUMP biosynthesis; dUMP from dCTP (dUTP route): step 1/2. In terms of biological role, catalyzes the deamination of dCTP to dUTP. The protein is dCTP deaminase of Cupriavidus necator (strain ATCC 17699 / DSM 428 / KCTC 22496 / NCIMB 10442 / H16 / Stanier 337) (Ralstonia eutropha).